The primary structure comprises 63 residues: Cecropin-A2 (63 aa).

The N-terminal stretch at 1 to 23 is a signal peptide; it reads MNFYNIFVFVALILAITIGQSEA. The residue at position 62 (Arg-62) is an Arginine amide.

It belongs to the cecropin family. In terms of tissue distribution, strongly expressed in larval, pupal and adult fat body and hemocytes after injection of bacteria. Maximal expression in the adult involves fat body cells of the head, thorax and abdomen.

It localises to the secreted. Functionally, cecropins have lytic and antibacterial activity against several Gram-positive and Gram-negative bacteria. The sequence is that of Cecropin-A2 from Drosophila melanogaster (Fruit fly).